A 241-amino-acid polypeptide reads, in one-letter code: ATP synthase subunit a (241 aa).

The next 5 membrane-spanning stretches (helical) occupy residues 30–50, 91–111, 128–148, 193–213, and 214–234; these read GQVFLTSWIVIGAILALVVVG, FIGTLFLFIFVSNWGGSLVPW, INTTVALALLVSLSYFYAGLS, LVVAVLVFLVPLFLPVPVMFL, and GLFTSAIQALIFATLAAYYIG.

It belongs to the ATPase A chain family. As to quaternary structure, F-type ATPases have 2 components, CF(1) - the catalytic core - and CF(0) - the membrane proton channel. CF(1) has five subunits: alpha(3), beta(3), gamma(1), delta(1), epsilon(1). CF(0) has four main subunits: a, b, b' and c.

The protein resides in the cellular thylakoid membrane. Key component of the proton channel; it plays a direct role in the translocation of protons across the membrane. The polypeptide is ATP synthase subunit a (Prochlorococcus marinus (strain MIT 9303)).